A 1892-amino-acid chain; its full sequence is Plexin A3 (1892 aa).

Residues 1–20 form the signal peptide; the sequence is MRSLWLLVFSFSVLTGTNMA. A Sema domain is found at 21–509; that stretch reads FPMILSERPE…SDKQVSRLPV (489 aa). The Extracellular segment spans residues 21-1240; it reads FPMILSERPE…IYSDSTLTLP (1220 aa). Asn-68 carries an N-linked (GlcNAc...) asparagine glycan. 9 disulfide bridges follow: Cys-86-Cys-95, Cys-121-Cys-129, Cys-283-Cys-404, Cys-299-Cys-355, Cys-373-Cys-392, Cys-512-Cys-529, Cys-518-Cys-560, Cys-521-Cys-538, and Cys-532-Cys-544. Residue Asn-569 is glycosylated (N-linked (GlcNAc...) asparagine). Cysteines 595 and 615 form a disulfide. 4 consecutive IPT/TIG domains span residues 861 to 955, 957 to 1041, 1044 to 1143, and 1146 to 1232; these read PRIT…YSFV, PSFS…YIYT, PNIS…FTYY, and PTFE…LHIY. The N-linked (GlcNAc...) asparagine glycan is linked to Asn-1183. Residues 1241–1261 form a helical membrane-spanning segment; it reads AIIGIGAGGGVLLIAIIAVLI. A coiled-coil region spans residues 1262 to 1315; that stretch reads AYKRKTRDADRTLKRLQLQMDNLESRVALECKEAFAELQTDIQELTNDMDGVKI. Residues 1262–1892 lie on the Cytoplasmic side of the membrane; that stretch reads AYKRKTRDAD…QAINLMSGSS (631 aa).

Belongs to the plexin family. In terms of tissue distribution, detected in primary motor neurons in the embryonic nervous system.

The protein resides in the cell membrane. Functionally, coreceptor for class 3 semaphorins. Necessary for signaling by class 3 semaphorins and subsequent remodeling of the cytoskeleton. Plays a role in axon guidance in the developing nervous system. Class 3 semaphorins bind to a complex composed of a neuropilin and a plexin. The plexin modulates the affinity of the complex for specific semaphorins, and its cytoplasmic domain is required for the activation of down-stream signaling events in the cytoplasm. This chain is Plexin A3 (plxna3), found in Danio rerio (Zebrafish).